A 111-amino-acid polypeptide reads, in one-letter code: MWSKIEENQTVEMTVNLRRICSRLPWTKKASKVVRMLKREIQKHFREEIGVVVTNDLNNFLYSRGIKKIPNKVRVRVTKETSLKNAEENVLKTDLVVVGSFKNLKEVIVDQ.

The protein belongs to the eukaryotic ribosomal protein eL31 family.

In Encephalitozoon cuniculi (strain GB-M1) (Microsporidian parasite), this protein is Large ribosomal subunit protein eL31 (RPL31).